A 247-amino-acid polypeptide reads, in one-letter code: Protein NipSnap homolog 3A (247 aa).

2 positions are modified to N6-acetyllysine: Lys-48 and Lys-166.

The protein belongs to the NipSnap family. Interacts with the Salmonella typhimurium virulence protein spiC. In terms of tissue distribution, ubiquitous. Highly expressed in liver, kidney and muscle. Expressed at intermediate level in brain, heart, colon, thymus, kidney, small intestine, placenta, lung, leukocytes and spleen.

It localises to the cytoplasm. The protein localises to the cytosol. The sequence is that of Protein NipSnap homolog 3A (NIPSNAP3A) from Homo sapiens (Human).